We begin with the raw amino-acid sequence, 308 residues long: uncharacterized protein (308 aa).

A coiled-coil region spans residues 212–242 (EADKMTIDYMRELDNLQRQYDGLVDEDKALH).

This is an uncharacterized protein from Ostreid herpesvirus 1 (isolate France) (OsHV-1).